Consider the following 156-residue polypeptide: Small ribosomal subunit protein uS7 (156 aa).

It belongs to the universal ribosomal protein uS7 family. As to quaternary structure, part of the 30S ribosomal subunit. Contacts proteins S9 and S11.

One of the primary rRNA binding proteins, it binds directly to 16S rRNA where it nucleates assembly of the head domain of the 30S subunit. Is located at the subunit interface close to the decoding center, probably blocks exit of the E-site tRNA. This is Small ribosomal subunit protein uS7 from Rhodopseudomonas palustris (strain BisB18).